The sequence spans 660 residues: 1-deoxy-D-xylulose-5-phosphate synthase (660 aa).

Thiamine diphosphate is bound by residues His-86 and 127 to 129; that span reads AHS. Asp-164 is a Mg(2+) binding site. Residues 165–166, Asn-196, Tyr-306, and Glu-388 contribute to the thiamine diphosphate site; that span reads GS. A Mg(2+)-binding site is contributed by Asn-196.

The protein belongs to the transketolase family. DXPS subfamily. As to quaternary structure, homodimer. Mg(2+) is required as a cofactor. Requires thiamine diphosphate as cofactor.

The catalysed reaction is D-glyceraldehyde 3-phosphate + pyruvate + H(+) = 1-deoxy-D-xylulose 5-phosphate + CO2. The protein operates within metabolic intermediate biosynthesis; 1-deoxy-D-xylulose 5-phosphate biosynthesis; 1-deoxy-D-xylulose 5-phosphate from D-glyceraldehyde 3-phosphate and pyruvate: step 1/1. In terms of biological role, catalyzes the acyloin condensation reaction between C atoms 2 and 3 of pyruvate and glyceraldehyde 3-phosphate to yield 1-deoxy-D-xylulose-5-phosphate (DXP). The polypeptide is 1-deoxy-D-xylulose-5-phosphate synthase (Gluconobacter oxydans (strain 621H) (Gluconobacter suboxydans)).